Here is a 578-residue protein sequence, read N- to C-terminus: Alpha-(1,6)-fucosyltransferase (578 aa).

The Cytoplasmic portion of the chain corresponds to 1 to 9 (MRPWTGSWR). Residues 10–30 (WIMLILFAWGTLLFYIGGHLV) traverse the membrane as a helical; Signal-anchor for type II membrane protein segment. Residues 31-578 (RDNENPDHSS…KYPTYQEAEK (548 aa)) are Lumenal-facing. 3 disulfide bridges follow: C207-C269, C215-C233, and C221-C225. Positions 209 to 496 (KAKKLVCNIN…PDASAHFHSL (288 aa)) constitute a GT23 domain. The SH3-binding motif lies at 302–308 (PRPPYLP). An important for donor substrate binding region spans residues 368-369 (RR). C468 and C475 form a disulfide bridge. Residues 505–566 (QNAHNQLAIY…PSYKVKEKIE (62 aa)) form the SH3 domain.

Belongs to the glycosyltransferase 23 family.

The protein localises to the golgi apparatus. It is found in the golgi stack membrane. It catalyses the reaction N(4)-{beta-D-GlcNAc-(1-&gt;2)-alpha-D-Man-(1-&gt;3)-[beta-D-GlcNAc-(1-&gt;2)-alpha-D-Man-(1-&gt;6)]-beta-D-Man-(1-&gt;4)-beta-D-GlcNAc-(1-&gt;4)-beta-D-GlcNAc}-L-asparaginyl-[protein] + GDP-beta-L-fucose = an N(4)-{beta-D-GlcNAc-(1-&gt;2)-alpha-D-Man-(1-&gt;3)-[beta-D-GlcNAc-(1-&gt;2)-alpha-D-Man-(1-&gt;6)]-beta-D-Man-(1-&gt;4)-beta-D-GlcNAc-(1-&gt;4)-[alpha-L-Fuc-(1-&gt;6)]-beta-D-GlcNAc}-L-asparaginyl-[protein] + GDP + H(+). It functions in the pathway protein modification; protein glycosylation. Its function is as follows. Catalyzes the addition of fucose in alpha 1-6 linkage to the first GlcNAc residue, next to the peptide chains in N-glycans. In Xenopus tropicalis (Western clawed frog), this protein is Alpha-(1,6)-fucosyltransferase (fut8).